The primary structure comprises 226 residues: Lysosomal-associated transmembrane protein 4B (226 aa).

The next 4 helical transmembrane spans lie at 26–46 (ILLG…LLSA), 72–92 (MCIA…ATYG), 100–120 (WIIP…LVAV), and 153–173 (CLVL…GYLI). A required for NEDD4 interaction region spans residues 205-221 (PPYDDATVNSATKEPPP).

This sequence belongs to the LAPTM4/LAPTM5 transporter family. As to quaternary structure, homooligomer; upon reaching the lysosomes. Interacts with MCOLN1. Interacts with NEDD4; may play a role in the lysosomal sorting of LAPTM4B; enhances HGS association with NEDD4; mediates inhibition of EGFR degradation. Interacts with PIP5K1C; promotes SNX5 association with LAPTM4B; kinase activity of PIP5K1C is required; interaction is regulated by phosphatidylinositol 4,5-bisphosphate generated by PIP5K1C. Interacts with HGS; promotes HGS ubiquitination. Interacts with SNX5. Interacts with SLC3A2 and SLC7A5; recruits SLC3A2 and SLC7A5 to lysosomes to promote leucine uptake into these organelles and is required for mTORC1 activation. Interacts with LRRC32; decreases TGFB1 production in regulatory T cells. Interacts with BECN1; competes with EGFR for LAPTM4B binding; regulates EGFR activity. Interacts with EGFR; positively correlates with EGFR activation. In terms of processing, undergoes proteolytic cleavage following delivery to the lysosomes. Ubiquitinated by NEDD4. Strongly expressed in fetal ovary, testis, adrenal gland, liver and uterus, and weakly expressed in the spleen.

The protein resides in the endomembrane system. It localises to the late endosome membrane. Its subcellular location is the cell membrane. The protein localises to the cell projection. It is found in the lysosome membrane. The protein resides in the endosome membrane. It localises to the endosome. Its subcellular location is the multivesicular body membrane. The protein localises to the multivesicular body lumen. Required for optimal lysosomal function. Blocks EGF-stimulated EGFR intraluminal sorting and degradation. Conversely by binding with the phosphatidylinositol 4,5-bisphosphate, regulates its PIP5K1C interaction, inhibits HGS ubiquitination and relieves LAPTM4B inhibition of EGFR degradation. Recruits SLC3A2 and SLC7A5 (the Leu transporter) to the lysosome, promoting entry of leucine and other essential amino acid (EAA) into the lysosome, stimulating activation of proton-transporting vacuolar (V)-ATPase protein pump (V-ATPase) and hence mTORC1 activation. Plays a role as negative regulator of TGFB1 production in regulatory T cells. Binds ceramide and facilitates its exit from late endosome in order to control cell death pathways. This Bos taurus (Bovine) protein is Lysosomal-associated transmembrane protein 4B.